Here is a 141-residue protein sequence, read N- to C-terminus: VLTEDDKNHVKGLWAHVHDHIDEIAADALTRMFLAHPASKTYFAHFDLSPDNAQIKAHGKKVANALNQAVAHLDDIKGTLSKLSELHAQQLRVDPVNFGFLRHCLEVSIAAHLHDHLKASVIVSLDKFLEEVCKDLVSKYR.

Positions 1-141 (VLTEDDKNHV…VCKDLVSKYR (141 aa)) constitute a Globin domain. Residue His58 participates in O2 binding. His87 provides a ligand contact to heme b.

It belongs to the globin family. In terms of assembly, the major hemoglobin component (HbIII) is a heterotetramer of two alpha-2 chains and two beta-1 chains. In terms of tissue distribution, red blood cells.

In terms of biological role, involved in oxygen transport from the lung to the various peripheral tissues. This Varanus albigularis (White-throated monitor) protein is Hemoglobin subunit alpha-2.